The primary structure comprises 327 residues: Phenylalanine--tRNA ligase alpha subunit (327 aa).

Glutamate 252 serves as a coordination point for Mg(2+).

It belongs to the class-II aminoacyl-tRNA synthetase family. Phe-tRNA synthetase alpha subunit type 1 subfamily. As to quaternary structure, tetramer of two alpha and two beta subunits. Mg(2+) is required as a cofactor.

The protein resides in the cytoplasm. The catalysed reaction is tRNA(Phe) + L-phenylalanine + ATP = L-phenylalanyl-tRNA(Phe) + AMP + diphosphate + H(+). The chain is Phenylalanine--tRNA ligase alpha subunit from Pectobacterium atrosepticum (strain SCRI 1043 / ATCC BAA-672) (Erwinia carotovora subsp. atroseptica).